A 391-amino-acid chain; its full sequence is 2,4,6-trihydroxybenzophenone synthase (391 aa).

Cysteine 165 is an active-site residue.

This sequence belongs to the thiolase-like superfamily. Chalcone/stilbene synthases family. As to quaternary structure, homodimer. Expressed in young fruit pericarp.

The enzyme catalyses benzoyl-CoA + 3 malonyl-CoA + 2 H(+) = 2,4,6-trihydroxybenzophenone + 3 CO2 + 4 CoA. In terms of biological role, type III polyketide synthase involved in the biosynthesis of benzophenones and xanthones. Produces mainly 2,4,6-trihydroxybenzophenone together with minor amounts of tetraketide lactone, triketide lactone and diketide lactone. The preferred substrate is benzoyl-CoA, but can also use acetyl-CoA, phenylacetyl-CoA, hexanoyl-CoA, cinnamoyl-CoA, p-coumaroyl-CoA and salicoyl-CoA. The sequence is that of 2,4,6-trihydroxybenzophenone synthase (BPS) from Garcinia mangostana (Mangosteen).